The sequence spans 974 residues: GATOR2 complex protein WDR59 (974 aa).

WD repeat units lie at residues 57–98 (QSKW…GEVG), 103–143 (GHTR…KPTV), 146–185 (SAVA…TAVE), 189–229 (AHLS…KYLN), 232–276 (PCQV…TPVH), 278–318 (FVGH…RVDS), and 319–362 (QMQR…TASH). A disordered region spans residues 350 to 374 (HTEDTDHQHTASHGEEEALKEDPPR). Residues 393–494 (QEFSLINVQI…RQLVSCLESF (102 aa)) enclose the RWD domain. Ser-564 carries the post-translational modification Phosphoserine. Residues 668-706 (LNVNDIQETCQKNAASALLVGRKDLVQVWSLATVATDLC) form a WD 8 repeat. A phosphoserine mark is found at Ser-821, Ser-822, and Ser-830. A disordered region spans residues 831-852 (LTYSDPRERERDQHDKNKRLLD). Basic and acidic residues predominate over residues 835–851 (DPRERERDQHDKNKRLL). A C4-type zinc finger spans residues 901–920 (YCSHCRSEVRGTQCAICKGF). Residues Cys-902, Cys-905, Cys-914, Cys-917, Cys-927, Cys-938, His-943, His-946, His-949, Cys-960, Cys-964, Cys-966, and Cys-968 each contribute to the Zn(2+) site. The RING-type; atypical zinc finger occupies 921–973 (TFQCAICHVAVRGSSNFCLTCGHGGHTSHMMEWFRTQEVCPTGCGCHCLLEST).

It belongs to the WD repeat WDR59 family. Component of the GATOR2 subcomplex, composed of MIOS, SEC13, SEH1L, WDR24 and WDR59. The GATOR2 complex interacts with CASTOR1 and CASTOR2; the interaction is negatively regulated by arginine. The GATOR2 complex interacts with SESN1, SESN2 and SESN3; the interaction is negatively regulated by amino acids. Interacts with DDB1-CUL4A/B E3 ligase complexes.

It localises to the lysosome membrane. The GATOR2 complex is negatively regulated by the upstream amino acid sensors CASTOR1 and SESN2, which sequester the GATOR2 complex in absence of amino acids. In the presence of abundant amino acids, GATOR2 is released from CASTOR1 and SESN2 and activated. Functionally, as a component of the GATOR2 complex, functions as an activator of the amino acid-sensing branch of the mTORC1 signaling pathway. The GATOR2 complex indirectly activates mTORC1 through the inhibition of the GATOR1 subcomplex. GATOR2 probably acts as an E3 ubiquitin-protein ligase toward GATOR1. In the presence of abundant amino acids, the GATOR2 complex mediates ubiquitination of the NPRL2 core component of the GATOR1 complex, leading to GATOR1 inactivation. In the absence of amino acids, GATOR2 is inhibited, activating the GATOR1 complex. This chain is GATOR2 complex protein WDR59, found in Homo sapiens (Human).